The chain runs to 348 residues: Keratocan (348 aa).

The first 26 residues, Met-1–Ser-26, serve as a signal peptide directing secretion. Residues Ala-40–Pro-69 form the LRRNT domain. 2 disulfides stabilise this stretch: Cys-41–Cys-47 and Cys-45–Cys-57. LRR repeat units lie at residues Pro-70 to Asn-92, Ala-93 to Ala-118, Met-119 to Pro-140, Ala-141 to Gly-163, Gly-165 to Gly-189, Leu-190 to Thr-213, Thr-215 to Gly-234, Leu-235 to Leu-260, Ser-262 to Ser-280, and Ser-281 to Pro-303. Residue Asn-92 is glycosylated (N-linked (GlcNAc...) (keratan sulfate) asparagine). N-linked (GlcNAc...) (keratan sulfate) asparagine glycosylation occurs at Asn-259. N-linked (GlcNAc...) asparagine glycosylation is present at Asn-297. The cysteines at positions 302 and 339 are disulfide-linked.

This sequence belongs to the small leucine-rich proteoglycan (SLRP) family. SLRP class II subfamily. Post-translationally, glycosylated. Contains keratan sulfate chains. Expressed in eye, where it is found in the corneal epithelial layer and to a lesser extent in the stromal layer (at protein level).

The protein resides in the secreted. The protein localises to the extracellular space. It localises to the extracellular matrix. Functionally, may be important in developing and maintaining corneal transparency and for the structure of the stromal matrix. This is Keratocan from Danio rerio (Zebrafish).